The following is a 96-amino-acid chain: MLLKLNIQLFASKKGVGSTRNGRDSHSKRLGAKISDGQYATAGSIIYRQRGTKIHPGYNVGVGSDYTLFTKINGFIKYTNKKNKKQVSVYENIKKI.

Positions 1 to 10 (MLLKLNIQLF) are excised as a propeptide.

It belongs to the bacterial ribosomal protein bL27 family. Post-translationally, the N-terminus is cleaved by ribosomal processing cysteine protease Prp.

This chain is Large ribosomal subunit protein bL27, found in Phytoplasma mali (strain AT).